Reading from the N-terminus, the 555-residue chain is E3 ubiquitin-protein ligase NEURL1B (555 aa).

The 157-residue stretch at 38 to 194 (APRFHAQAKG…ITDEVQLLES (157 aa)) folds into the NHR 1 domain. At threonine 199 the chain carries Phosphothreonine. Positions 279-433 (DLRFHATRGP…GVAGQLRLLG (155 aa)) constitute an NHR 2 domain. Residues 436–493 (QSSPATTTPSGSLSGSQDDSDSDMTFSVNQSSSASESSLVTAPSSPLSPPVSPVFSPP) form a disordered region. Residues 462–480 (SVNQSSSASESSLVTAPSS) are compositionally biased toward low complexity. The segment covering 481–493 (PLSPPVSPVFSPP) has biased composition (pro residues). The RING-type zinc finger occupies 503 to 543 (CTVCFDGEVDTVIYTCGHMCLCHSCGLRLKRQARACCPICR).

As to quaternary structure, interacts with JAG1, DLL1 and DLL4. Highest expression in brain, prostate and small intestine. In the brain the levels are higher in fetal than in adult stage. In the adult brain the highest levels are detected in the olfactory system, cerebellar cortex, optic nerve and the frontal lobe.

The protein resides in the cytoplasm. The catalysed reaction is S-ubiquitinyl-[E2 ubiquitin-conjugating enzyme]-L-cysteine + [acceptor protein]-L-lysine = [E2 ubiquitin-conjugating enzyme]-L-cysteine + N(6)-ubiquitinyl-[acceptor protein]-L-lysine.. It participates in protein modification; protein ubiquitination. In terms of biological role, E3 ubiquitin-protein ligase involved in regulation of the Notch pathway through influencing the stability and activity of several Notch ligands. In Homo sapiens (Human), this protein is E3 ubiquitin-protein ligase NEURL1B (NEURL1B).